The chain runs to 126 residues: Methylglyoxal synthase (126 aa).

In terms of domain architecture, MGS-like spans 1–126 (MADRKCLALI…AEQLIDFRRN (126 aa)). Substrate contacts are provided by residues H12, K16, 38–41 (TGTT), and 59–60 (SG). D65 acts as the Proton donor/acceptor in catalysis. Substrate is bound at residue H92.

It belongs to the methylglyoxal synthase family.

It catalyses the reaction dihydroxyacetone phosphate = methylglyoxal + phosphate. Functionally, catalyzes the formation of methylglyoxal from dihydroxyacetone phosphate. The protein is Methylglyoxal synthase of Rhizobium meliloti (strain 1021) (Ensifer meliloti).